Reading from the N-terminus, the 456-residue chain is Asparagine--tRNA ligase (456 aa).

Belongs to the class-II aminoacyl-tRNA synthetase family. In terms of assembly, homodimer.

The protein localises to the cytoplasm. The catalysed reaction is tRNA(Asn) + L-asparagine + ATP = L-asparaginyl-tRNA(Asn) + AMP + diphosphate + H(+). In Mycoplasmoides gallisepticum (strain R(low / passage 15 / clone 2)) (Mycoplasma gallisepticum), this protein is Asparagine--tRNA ligase.